The chain runs to 268 residues: MPQVTMRQMLEAGVHFGHQTRYWNPKMAPYIFGARGKIHIINLEKTVPLFNDAMNFISSVAQKRGTVLFLGTKRSARETIKEEAERCGMPFMNQRWLGGTLTNFRTVKQSVARLKELEAGETDGTFEKLVKHEVLGLRRERDKLEASLGGIKDMNRLPDAIFVIDIGHEDIAIKEAKKLGIPVIAVVDTNYNPELVDYAIPGNDDAIRAVQLYARAAADAVLEGKAAAPHAASVREEEFAEAAAEGEEKPARRAPAKKAAKKGDDAQA.

Residues 233-268 are disordered; sequence SVREEEFAEAAAEGEEKPARRAPAKKAAKKGDDAQA.

Belongs to the universal ribosomal protein uS2 family.

The protein is Small ribosomal subunit protein uS2 of Stenotrophomonas maltophilia (strain K279a).